The following is a 139-amino-acid chain: Small integral membrane protein 34 (139 aa).

The chain crosses the membrane as a helical span at residues 46-66 (GTSAAWYILTIIGIYAVIFVF).

The protein resides in the membrane. In Homo sapiens (Human), this protein is Small integral membrane protein 34.